We begin with the raw amino-acid sequence, 280 residues long: Protease HtpX (280 aa).

2 helical membrane-spanning segments follow: residues 7–26 and 30–49; these read TFIL…GLLG and GMLI…YWYS. H129 lines the Zn(2+) pocket. E130 is a catalytic residue. H133 serves as a coordination point for Zn(2+). Transmembrane regions (helical) follow at residues 146–166 and 178–198; these read ATIA…SMFG and VVGM…QMAI. Residue E203 coordinates Zn(2+).

Belongs to the peptidase M48B family. It depends on Zn(2+) as a cofactor.

The protein localises to the cell inner membrane. The protein is Protease HtpX of Legionella pneumophila subsp. pneumophila (strain Philadelphia 1 / ATCC 33152 / DSM 7513).